Reading from the N-terminus, the 309-residue chain is Methionyl-tRNA formyltransferase (309 aa).

Position 112 to 115 (Ser112 to Pro115) interacts with (6S)-5,6,7,8-tetrahydrofolate.

This sequence belongs to the Fmt family.

It carries out the reaction L-methionyl-tRNA(fMet) + (6R)-10-formyltetrahydrofolate = N-formyl-L-methionyl-tRNA(fMet) + (6S)-5,6,7,8-tetrahydrofolate + H(+). Its function is as follows. Attaches a formyl group to the free amino group of methionyl-tRNA(fMet). The formyl group appears to play a dual role in the initiator identity of N-formylmethionyl-tRNA by promoting its recognition by IF2 and preventing the misappropriation of this tRNA by the elongation apparatus. The polypeptide is Methionyl-tRNA formyltransferase (Bartonella tribocorum (strain CIP 105476 / IBS 506)).